The primary structure comprises 264 residues: S-adenosylmethionine decarboxylase proenzyme (264 aa).

Catalysis depends on Ser112, which acts as the Schiff-base intermediate with substrate; via pyruvic acid. Position 112 is a pyruvic acid (Ser); by autocatalysis (Ser112). His117 acts as the Proton acceptor; for processing activity in catalysis. Cys140 serves as the catalytic Proton donor; for catalytic activity.

It belongs to the prokaryotic AdoMetDC family. Type 2 subfamily. In terms of assembly, heterooctamer of four alpha and four beta chains arranged as a tetramer of alpha/beta heterodimers. The cofactor is pyruvate. In terms of processing, is synthesized initially as an inactive proenzyme. Formation of the active enzyme involves a self-maturation process in which the active site pyruvoyl group is generated from an internal serine residue via an autocatalytic post-translational modification. Two non-identical subunits are generated from the proenzyme in this reaction, and the pyruvate is formed at the N-terminus of the alpha chain, which is derived from the carboxyl end of the proenzyme. The post-translation cleavage follows an unusual pathway, termed non-hydrolytic serinolysis, in which the side chain hydroxyl group of the serine supplies its oxygen atom to form the C-terminus of the beta chain, while the remainder of the serine residue undergoes an oxidative deamination to produce ammonia and the pyruvoyl group blocking the N-terminus of the alpha chain.

The enzyme catalyses S-adenosyl-L-methionine + H(+) = S-adenosyl 3-(methylsulfanyl)propylamine + CO2. It participates in amine and polyamine biosynthesis; S-adenosylmethioninamine biosynthesis; S-adenosylmethioninamine from S-adenosyl-L-methionine: step 1/1. Catalyzes the decarboxylation of S-adenosylmethionine to S-adenosylmethioninamine (dcAdoMet), the propylamine donor required for the synthesis of the polyamines spermine and spermidine from the diamine putrescine. The protein is S-adenosylmethionine decarboxylase proenzyme of Salmonella dublin (strain CT_02021853).